A 404-amino-acid chain; its full sequence is O-antigen ligase (404 aa).

Transmembrane regions (helical) follow at residues 16-32, 39-55, 67-84, 96-115, 127-147, 168-183, 189-221, 228-246, 324-343, 363-379, and 385-401; these read IWNK…YFLD, HLII…QVSR, SVFY…YSIL, FENT…PVLL, VLFS…ILYI, SMVF…WLFR, LVFL…GVLW, WKLI…ALVI, ILYI…VYLY, YNAH…FYIV, and QVDI…LLAL.

This sequence belongs to the O-antigen ligase family.

Its subcellular location is the cell inner membrane. It catalyses the reaction a lipid-linked O antigen + a lipid A-core oligosaccharide = a lipopolysaccharide + a polyisoprenyl diphosphate.. It participates in bacterial outer membrane biogenesis; lipopolysaccharide biosynthesis. Functionally, transferase involved in the biosynthesis of the lipopolysaccharide (LPS). Catalyzes the transfer of a polymerized O-antigen molecule from its polyprenyl diphosphate membrane anchor to a terminal sugar of the lipid A-core oligosaccharide, finalizing the biosynthesis of the lipopolysaccharide. May also be involved in a feedback mechanism to regulate O-unit synthesis, based on the availability of O units on the periplasmic face of the membrane. The protein is O-antigen ligase of Salmonella typhimurium (strain LT2 / SGSC1412 / ATCC 700720).